The sequence spans 187 residues: MATGPRYKVPMRRRREARTDYHQRLRLLKSGKPRLVARKSNKHVRAQLVTLGPNGDDTLASAHSSDLAEYGWEAPTGNMPSAYLTGLLAGLRAQEAGVEEAVLDIGLNSPTPGSKVFAIQEGAIDAGLDIPHNDDVLADWQRTRGAHIAEYDEQLEEPLYSGDFDAADLPEHFDELRETLLDGDIEL.

It belongs to the universal ribosomal protein uL18 family. In terms of assembly, part of the 50S ribosomal subunit. Interacts with proteins L5 and L21e, and attaches the 5S rRNA to the 23S rRNA. Has been cross-linked to L21e.

This is one of 5 proteins that mediate the attachment of the 5S rRNA onto the large ribosomal subunit, where it forms part of the central protuberance and stabilizes the orientation of adjacent RNA domains. The protein is Large ribosomal subunit protein uL18 (rpl18) of Haloarcula marismortui (strain ATCC 43049 / DSM 3752 / JCM 8966 / VKM B-1809) (Halobacterium marismortui).